The primary structure comprises 317 residues: Ribosomal protein L11 methyltransferase (317 aa).

S-adenosyl-L-methionine-binding residues include T158, G179, D201, and N244.

It belongs to the methyltransferase superfamily. PrmA family.

It is found in the cytoplasm. The enzyme catalyses L-lysyl-[protein] + 3 S-adenosyl-L-methionine = N(6),N(6),N(6)-trimethyl-L-lysyl-[protein] + 3 S-adenosyl-L-homocysteine + 3 H(+). Its function is as follows. Methylates ribosomal protein L11. The polypeptide is Ribosomal protein L11 methyltransferase (Streptococcus pyogenes serotype M3 (strain ATCC BAA-595 / MGAS315)).